A 189-amino-acid chain; its full sequence is Peptidyl-tRNA hydrolase (189 aa).

Y15 lines the tRNA pocket. The active-site Proton acceptor is H20. Positions 66, 68, and 114 each coordinate tRNA.

The protein belongs to the PTH family. As to quaternary structure, monomer.

It localises to the cytoplasm. It carries out the reaction an N-acyl-L-alpha-aminoacyl-tRNA + H2O = an N-acyl-L-amino acid + a tRNA + H(+). Hydrolyzes ribosome-free peptidyl-tRNAs (with 1 or more amino acids incorporated), which drop off the ribosome during protein synthesis, or as a result of ribosome stalling. Its function is as follows. Catalyzes the release of premature peptidyl moieties from peptidyl-tRNA molecules trapped in stalled 50S ribosomal subunits, and thus maintains levels of free tRNAs and 50S ribosomes. This Streptococcus pneumoniae (strain P1031) protein is Peptidyl-tRNA hydrolase.